We begin with the raw amino-acid sequence, 86 residues long: Translation machinery-associated protein 10 (86 aa).

Residues Ser28 and Ser79 each carry the phosphoserine modification. Residues 63–86 (NKTRRGSNSQNNERRLSDLQQYHI) form a disordered region.

Belongs to the STF2 family. In terms of assembly, associates with ribosomes.

It is found in the cytoplasm. The protein resides in the nucleus. In terms of biological role, may be involved in inhibition of the reverse ATPase reaction of mitochondrial F(1)F(0)-type ATP synthase. The sequence is that of Translation machinery-associated protein 10 from Saccharomyces cerevisiae (strain ATCC 204508 / S288c) (Baker's yeast).